The sequence spans 83 residues: Defensin-like protein 47 (83 aa).

A signal peptide spans 1–27 (MGSTKTLVTCFLVIILAVSLPNNNVLA). Cystine bridges form between C40–C81, C44–C68, C53–C79, and C57–C80.

The protein belongs to the DEFL family.

The protein resides in the secreted. This is Defensin-like protein 47 from Arabidopsis thaliana (Mouse-ear cress).